The sequence spans 308 residues: Ribonuclease HIII (308 aa).

The 216-residue stretch at Met-93–Ile-308 folds into the RNase H type-2 domain. Asp-99, Glu-100, and Asp-204 together coordinate a divalent metal cation.

The protein belongs to the RNase HII family. RnhC subfamily. Mn(2+) serves as cofactor. It depends on Mg(2+) as a cofactor.

The protein localises to the cytoplasm. It catalyses the reaction Endonucleolytic cleavage to 5'-phosphomonoester.. Functionally, endonuclease that specifically degrades the RNA of RNA-DNA hybrids. This Lysinibacillus sphaericus (strain C3-41) protein is Ribonuclease HIII.